Here is a 420-residue protein sequence, read N- to C-terminus: Arginine biosynthesis bifunctional protein ArgJ (420 aa).

6 residues coordinate substrate: Thr-167, Lys-193, Thr-204, Glu-284, Asn-415, and Thr-420. The Nucleophile role is filled by Thr-204.

Belongs to the ArgJ family. As to quaternary structure, heterotetramer of two alpha and two beta chains.

Its subcellular location is the cytoplasm. The enzyme catalyses N(2)-acetyl-L-ornithine + L-glutamate = N-acetyl-L-glutamate + L-ornithine. The catalysed reaction is L-glutamate + acetyl-CoA = N-acetyl-L-glutamate + CoA + H(+). It participates in amino-acid biosynthesis; L-arginine biosynthesis; L-ornithine and N-acetyl-L-glutamate from L-glutamate and N(2)-acetyl-L-ornithine (cyclic): step 1/1. It functions in the pathway amino-acid biosynthesis; L-arginine biosynthesis; N(2)-acetyl-L-ornithine from L-glutamate: step 1/4. Catalyzes two activities which are involved in the cyclic version of arginine biosynthesis: the synthesis of N-acetylglutamate from glutamate and acetyl-CoA as the acetyl donor, and of ornithine by transacetylation between N(2)-acetylornithine and glutamate. The chain is Arginine biosynthesis bifunctional protein ArgJ from Prochlorococcus marinus (strain NATL2A).